Consider the following 424-residue polypeptide: UPF0761 membrane protein Smlt0865 (424 aa).

6 helical membrane-spanning segments follow: residues 48 to 68 (VFAL…FPVF), 101 to 121 (SAGQ…LITL), 144 to 164 (FLVY…SLAV), 181 to 201 (WLAE…CITL), 216 to 236 (AVPG…GIGA), and 251 to 271 (VAFV…VLLG).

The protein belongs to the UPF0761 family.

It localises to the cell inner membrane. This chain is UPF0761 membrane protein Smlt0865, found in Stenotrophomonas maltophilia (strain K279a).